A 1450-amino-acid polypeptide reads, in one-letter code: ABC transporter G family member 37 (1450 aa).

The region spanning glycine 158 to alanine 431 is the ABC transporter 1 domain. Residue glycine 191 to threonine 198 coordinates ATP. Positions glutamate 509–phenylalanine 721 constitute an ABC transmembrane type-2 1 domain. The next 6 helical transmembrane spans lie at phenylalanine 527–phenylalanine 547, glycine 559–alanine 579, isoleucine 614–phenylalanine 634, leucine 646–glycine 666, valine 670–isoleucine 690, and isoleucine 756–leucine 776. Residues isoleucine 852–aspartate 1104 form the ABC transporter 2 domain. Glycine 897–threonine 904 is a binding site for ATP. The ABC transmembrane type-2 2 domain occupies threonine 1177–phenylalanine 1391. Transmembrane regions (helical) follow at residues alanine 1198 to leucine 1218, tyrosine 1236 to valine 1256, leucine 1284 to phenylalanine 1304, phenylalanine 1311 to methionine 1331, isoleucine 1341 to isoleucine 1361, tryptophan 1372 to glycine 1392, and valine 1422 to isoleucine 1442.

This sequence belongs to the ABC transporter superfamily. ABCG family. PDR (TC 3.A.1.205) subfamily.

It localises to the membrane. In terms of biological role, may be a general defense protein. This Oryza sativa subsp. japonica (Rice) protein is ABC transporter G family member 37.